The following is an 850-amino-acid chain: Protein monoglycylase TTLL8 (850 aa).

Disordered stretches follow at residues 1–29 (MEPE…QGIS) and 228–254 (RSSR…DAEN). The TTL domain occupies 222–580 (SHQSCSRSSR…DRSCDIGNFE (359 aa)). ATP contacts are provided by residues Lys-354, 360–361 (RG), 392–395 (QKYI), 405–407 (KFD), and 449–450 (CN). Arg-360 is an a protein binding site. Mg(2+) is bound by residues Asp-527, Glu-540, and Asn-542. Glu-540 contacts ATP. A disordered region spans residues 627–652 (AQPLKARGPSAMPDPAQGPPSPALQR).

It depends on Mg(2+) as a cofactor.

Its subcellular location is the cytoplasm. The protein resides in the cytoskeleton. It localises to the cell projection. It is found in the cilium. The protein localises to the cilium axoneme. Its subcellular location is the flagellum axoneme. The catalysed reaction is L-glutamyl-[protein] + glycine + ATP = glycyl-L-glutamyl-[protein] + ADP + phosphate + H(+). Functionally, monoglycylase which modifies both tubulin and non-tubulin proteins, adding a single glycine to the gamma-carboxyl groups of specific glutamate residues to generate monoglycine side chains within the C-terminal tail of target proteins. Not involved in elongation step of the polyglycylation reaction. Preferentially monoglycylates alpha-tubulin over beta-tubulin. Together with TTLL3, mediates microtubule glycylation of primary and motile cilia, which is essential for their stability and maintenance. Together with TTLL3, glycylates sperm flagella which regulates axonemal dynein motor activity, thereby controlling flagellar beat, directional sperm swimming and male fertility. Monoglycylates non-tubulin proteins such as ANP32A, ANP32B, SET, NCL and NAP1. This chain is Protein monoglycylase TTLL8, found in Homo sapiens (Human).